The chain runs to 203 residues: Holliday junction branch migration complex subunit RuvA (203 aa).

The interval 1-63 (MIGKLSGKVD…EEHMHLYGFL (63 aa)) is domain I. Residues 64 to 142 (TLEEKIFFNL…KISSGSAIIK (79 aa)) form a domain II region. The flexible linker stretch occupies residues 143 to 149 (ESLNIKN). The segment at 150–203 (ITPVASNEVIKALVNLGFSRFEAQNAVQGIITQNPEISIDELIKTALKNRNSNF) is domain III.

It belongs to the RuvA family. In terms of assembly, homotetramer. Forms an RuvA(8)-RuvB(12)-Holliday junction (HJ) complex. HJ DNA is sandwiched between 2 RuvA tetramers; dsDNA enters through RuvA and exits via RuvB. An RuvB hexamer assembles on each DNA strand where it exits the tetramer. Each RuvB hexamer is contacted by two RuvA subunits (via domain III) on 2 adjacent RuvB subunits; this complex drives branch migration. In the full resolvosome a probable DNA-RuvA(4)-RuvB(12)-RuvC(2) complex forms which resolves the HJ.

Its subcellular location is the cytoplasm. Its function is as follows. The RuvA-RuvB-RuvC complex processes Holliday junction (HJ) DNA during genetic recombination and DNA repair, while the RuvA-RuvB complex plays an important role in the rescue of blocked DNA replication forks via replication fork reversal (RFR). RuvA specifically binds to HJ cruciform DNA, conferring on it an open structure. The RuvB hexamer acts as an ATP-dependent pump, pulling dsDNA into and through the RuvAB complex. HJ branch migration allows RuvC to scan DNA until it finds its consensus sequence, where it cleaves and resolves the cruciform DNA. The chain is Holliday junction branch migration complex subunit RuvA from Rickettsia peacockii (strain Rustic).